The sequence spans 656 residues: Nuclear pore complex protein Nup85 (656 aa).

Residue Met1 is modified to N-acetylmethionine. Residue Lys92 is modified to N6-acetyllysine. Residue Ser223 is modified to Phosphoserine.

Belongs to the nucleoporin Nup85 family. In terms of assembly, component of the nuclear pore complex (NPC). Component of the NPC Nup107-160 subcomplex, consisting of at least NUP107, NUP98/Nup96, NUP160, NUP133, NUP85, NUP37, NUP43 and SEC13. Interacts with NUP160, NUP133 and SEC13. Interacts with NUP37, NUP107 and NUP43. Interacts with CCR2.

The protein localises to the nucleus. It localises to the nuclear pore complex. The protein resides in the chromosome. Its subcellular location is the centromere. It is found in the kinetochore. The protein localises to the cytoplasm. It localises to the cytoskeleton. The protein resides in the spindle. Its subcellular location is the nucleus membrane. Essential component of the nuclear pore complex (NPC) that seems to be required for NPC assembly and maintenance. As part of the NPC Nup107-160 subcomplex plays a role in RNA export and in tethering NUP96/Nup98 and NUP153 to the nucleus. The Nup107-160 complex seems to be required for spindle assembly during mitosis. NUP85 is required for membrane clustering of CCL2-activated CCR2. Seems to be involved in CCR2-mediated chemotaxis of monocytes and may link activated CCR2 to the phosphatidyl-inositol 3-kinase-Rac-lammellipodium protrusion cascade. Involved in nephrogenesis. The protein is Nuclear pore complex protein Nup85 (NUP85) of Homo sapiens (Human).